A 73-amino-acid chain; its full sequence is Large ribosomal subunit protein bL32c (73 aa).

This sequence belongs to the bacterial ribosomal protein bL32 family.

Its subcellular location is the plastid. It is found in the chloroplast. The chain is Large ribosomal subunit protein bL32c from Jasminum nudiflorum (Winter jasmine).